The sequence spans 356 residues: Glycerol-1-phosphate dehydrogenase [NAD(P)+] (356 aa).

NAD(+)-binding positions include 103–107 (GRSID) and 125–128 (TAAS). Asp130 serves as a coordination point for substrate. Ser134 serves as a coordination point for NAD(+). Asp177 lines the substrate pocket. The Zn(2+) site is built by Asp177 and His257. Substrate is bound at residue His261. Residue His273 coordinates Zn(2+).

It belongs to the glycerol-1-phosphate dehydrogenase family. Zn(2+) serves as cofactor.

It is found in the cytoplasm. The enzyme catalyses sn-glycerol 1-phosphate + NAD(+) = dihydroxyacetone phosphate + NADH + H(+). It catalyses the reaction sn-glycerol 1-phosphate + NADP(+) = dihydroxyacetone phosphate + NADPH + H(+). The protein operates within membrane lipid metabolism; glycerophospholipid metabolism. In terms of biological role, catalyzes the NAD(P)H-dependent reduction of dihydroxyacetonephosphate (DHAP or glycerone phosphate) to glycerol 1-phosphate (G1P). The G1P thus generated is used as the glycerophosphate backbone of phospholipids in the cellular membranes of Archaea. In Methanosarcina acetivorans (strain ATCC 35395 / DSM 2834 / JCM 12185 / C2A), this protein is Glycerol-1-phosphate dehydrogenase [NAD(P)+].